The sequence spans 1912 residues: Protein javelin (1912 aa).

10 disordered regions span residues 1-32 (MGNG…QHNY), 89-145 (GTGL…VGGA), 298-377 (RSRH…HRLS), 460-515 (QSRR…SLSE), 545-586 (TTRT…TLRQ), 764-920 (SYNQ…EAPV), 965-1010 (IQEN…GKPL), 1257-1297 (GINS…GGAA), 1486-1507 (EQQE…QYED), and 1881-1912 (YDPS…DDKM). 2 stretches are compositionally biased toward basic residues: residues 97-133 (QQLH…HPHA) and 299-313 (SRHK…KKPP). Over residues 339-354 (ADDTQSQRSNSATCDS) the composition is skewed to polar residues. Over residues 355–374 (HQQQQQQQHQPQQQHQQQQH) the composition is skewed to low complexity. The span at 489 to 498 (EHSQSSVFPE) shows a compositional bias: polar residues. The segment covering 499-512 (TTTSNSDDQTDSPS) has biased composition (low complexity). The span at 553–566 (SEEGEEEQTGEEVV) shows a compositional bias: acidic residues. The segment covering 568–586 (SLTTPTEPQTSDSESTLRQ) has biased composition (polar residues). Basic and acidic residues-rich tracts occupy residues 772–792 (QRKE…DSIR) and 802–869 (RQRE…RKEE). Acidic residues predominate over residues 890–904 (SQQEDTVADVEEEDN). The segment covering 965–979 (IQENKETSQRIEPKP) has biased composition (basic and acidic residues). A compositionally biased stretch (low complexity) spans 981–990 (PKTNSNSSST). Composition is skewed to acidic residues over residues 1494–1507 (LEEE…QYED) and 1903–1912 (ELYDSLDDKM).

The protein localises to the cytoplasm. Its subcellular location is the cytoskeleton. Functionally, important for normal assembly of actin bundles during bristle formation. The sequence is that of Protein javelin from Drosophila melanogaster (Fruit fly).